A 152-amino-acid chain; its full sequence is Deoxyuridine 5'-triphosphate nucleotidohydrolase (152 aa).

Substrate is bound by residues 71 to 73 (RSG), asparagine 84, 88 to 90 (LID), and methionine 98.

The protein belongs to the dUTPase family. The cofactor is Mg(2+).

It carries out the reaction dUTP + H2O = dUMP + diphosphate + H(+). Its pathway is pyrimidine metabolism; dUMP biosynthesis; dUMP from dCTP (dUTP route): step 2/2. This enzyme is involved in nucleotide metabolism: it produces dUMP, the immediate precursor of thymidine nucleotides and it decreases the intracellular concentration of dUTP so that uracil cannot be incorporated into DNA. The sequence is that of Deoxyuridine 5'-triphosphate nucleotidohydrolase from Serratia proteamaculans (strain 568).